The chain runs to 230 residues: Demethylmenaquinone methyltransferase (230 aa).

Residues threonine 57, aspartate 77, and 101–102 (DI) each bind S-adenosyl-L-methionine.

Belongs to the class I-like SAM-binding methyltransferase superfamily. MenG/UbiE family.

It carries out the reaction a 2-demethylmenaquinol + S-adenosyl-L-methionine = a menaquinol + S-adenosyl-L-homocysteine + H(+). It participates in quinol/quinone metabolism; menaquinone biosynthesis; menaquinol from 1,4-dihydroxy-2-naphthoate: step 2/2. Its function is as follows. Methyltransferase required for the conversion of demethylmenaquinol (DMKH2) to menaquinol (MKH2). This chain is Demethylmenaquinone methyltransferase, found in Chlamydia pneumoniae (Chlamydophila pneumoniae).